The sequence spans 405 residues: Tryptophan synthase beta chain (405 aa).

K95 is subject to N6-(pyridoxal phosphate)lysine.

This sequence belongs to the TrpB family. As to quaternary structure, tetramer of two alpha and two beta chains. Requires pyridoxal 5'-phosphate as cofactor.

The enzyme catalyses (1S,2R)-1-C-(indol-3-yl)glycerol 3-phosphate + L-serine = D-glyceraldehyde 3-phosphate + L-tryptophan + H2O. It participates in amino-acid biosynthesis; L-tryptophan biosynthesis; L-tryptophan from chorismate: step 5/5. In terms of biological role, the beta subunit is responsible for the synthesis of L-tryptophan from indole and L-serine. This is Tryptophan synthase beta chain from Pseudomonas putida (strain ATCC 700007 / DSM 6899 / JCM 31910 / BCRC 17059 / LMG 24140 / F1).